The chain runs to 831 residues: Isethionate sulfite-lyase (831 aa).

The PFL domain maps to 32 to 701 (PRVFRLLERF…VVSATPNGRT (670 aa)). 2-hydroxyethane-1-sulfonate is bound by residues Arg-189, Gln-193, 468–470 (CTE), and Arg-679. The active-site Cysteine radical intermediate is Cys-468. Glu-470 serves as the catalytic Proton acceptor. One can recognise a Glycine radical domain in the interval 708–831 (DGSSASHGAD…LIARTEHDVM (124 aa)). Position 806 is a glycine radical (Gly-806).

The protein belongs to the glycyl radical enzyme (GRE) family. As to quaternary structure, homodimer. Requires the activating protein IslB to generate the key active site glycyl radical on Gly-806 that is involved in catalysis.

The catalysed reaction is 2-hydroxyethane-1-sulfonate = acetaldehyde + sulfite + H(+). It participates in organosulfur degradation; alkanesulfonate degradation. In terms of biological role, involved in an anaerobic respiration pathway that converts the sulfonate isethionate (2-hydroxyethanesulfonate) to ammonia, acetate and sulfide. Catalyzes the radical-mediated C-S bond cleavage of isethionate (2-hydroxyethanesulfonate) to form sulfite and acetaldehyde. The chain is Isethionate sulfite-lyase from Desulfovibrio desulfuricans (strain ATCC 27774 / DSM 6949 / MB).